Consider the following 88-residue polypeptide: RNA-binding protein Hfq (88 aa).

Residues 9–68 (DPFLNALRRERIPVSIYLVNGIKLQGQIESFDQFVILLKNTVNQMVYKHAISTVVPARAV) enclose the Sm domain. Residues 66 to 88 (RAVSHHSGEQQRAPSDRPEKTED) are disordered. A compositionally biased stretch (basic and acidic residues) spans 71-88 (HSGEQQRAPSDRPEKTED).

Belongs to the Hfq family. As to quaternary structure, homohexamer.

In terms of biological role, RNA chaperone that binds small regulatory RNA (sRNAs) and mRNAs to facilitate mRNA translational regulation in response to envelope stress, environmental stress and changes in metabolite concentrations. Also binds with high specificity to tRNAs. The chain is RNA-binding protein Hfq from Vibrio atlanticus (strain LGP32) (Vibrio splendidus (strain Mel32)).